Reading from the N-terminus, the 343-residue chain is Farnesyl pyrophosphate synthase (343 aa).

Isopentenyl diphosphate contacts are provided by lysine 49, arginine 52, and glutamine 87. Mg(2+)-binding residues include aspartate 94 and aspartate 98. Arginine 103 lines the dimethylallyl diphosphate pocket. Arginine 104 contributes to the isopentenyl diphosphate binding site. 5 residues coordinate dimethylallyl diphosphate: lysine 191, threonine 192, glutamine 230, lysine 247, and lysine 256.

The protein belongs to the FPP/GGPP synthase family. It depends on Mg(2+) as a cofactor. In terms of tissue distribution, expressed both in apical and sub-apical cells of glandular secretory trichomes.

It is found in the cytoplasm. It localises to the nucleus. It carries out the reaction isopentenyl diphosphate + dimethylallyl diphosphate = (2E)-geranyl diphosphate + diphosphate. The enzyme catalyses isopentenyl diphosphate + (2E)-geranyl diphosphate = (2E,6E)-farnesyl diphosphate + diphosphate. It functions in the pathway isoprenoid biosynthesis; farnesyl diphosphate biosynthesis; farnesyl diphosphate from geranyl diphosphate and isopentenyl diphosphate: step 1/1. The protein operates within sesquiterpene biosynthesis. Its pathway is isoprenoid biosynthesis; geranyl diphosphate biosynthesis; geranyl diphosphate from dimethylallyl diphosphate and isopentenyl diphosphate: step 1/1. Its function is as follows. Involved in the biosynthesis of the antimalarial endoperoxide artemisinin. Catalyzes the sequential condensation of isopentenyl pyrophosphate with the allylic pyrophosphates, dimethylallyl pyrophosphate, and then with the resultant geranylpyrophosphate to the ultimate product farnesyl pyrophosphate. Promotes anti-malarial and antimicrobial (toward Gram-positive bacteria B.subtilis and S.aureus) activities of plant crude extract probably by triggering artemisinin levels. This Artemisia annua (Sweet wormwood) protein is Farnesyl pyrophosphate synthase.